The chain runs to 472 residues: 2-amino-4-ketopentanoate thiolase beta subunit (472 aa).

Lys-102 bears the N6-(pyridoxal phosphate)lysine mark. Pyridoxal 5'-phosphate-binding positions include Asn-128 and 238–242 (AGGGN).

It belongs to the threonine synthase family. As to quaternary structure, heterodimer with OrtA. Pyridoxal 5'-phosphate serves as cofactor.

The catalysed reaction is D-alanine + acetyl-CoA = (2R)-2-amino-4-oxopentanoate + CoA. Involved in the ornithine fermentation pathway. Catalyzes the thiolytic cleavage of 2-amino-4-ketopentanoate (AKP) with coenzyme A (CoA) to form acetyl-CoA and alanine. It is strictly specific for AKP. This is 2-amino-4-ketopentanoate thiolase beta subunit from Unknown prokaryotic organism.